The sequence spans 124 residues: Small ribosomal subunit protein uS12 (124 aa).

Asp89 is subject to 3-methylthioaspartic acid. Lys108 is modified (N6-acetyllysine).

It belongs to the universal ribosomal protein uS12 family. As to quaternary structure, part of the 30S ribosomal subunit. Contacts proteins S8 and S17. May interact with IF1 in the 30S initiation complex.

Functionally, with S4 and S5 plays an important role in translational accuracy. In terms of biological role, interacts with and stabilizes bases of the 16S rRNA that are involved in tRNA selection in the A site and with the mRNA backbone. Located at the interface of the 30S and 50S subunits, it traverses the body of the 30S subunit contacting proteins on the other side and probably holding the rRNA structure together. The combined cluster of proteins S8, S12 and S17 appears to hold together the shoulder and platform of the 30S subunit. The polypeptide is Small ribosomal subunit protein uS12 (Escherichia coli O6:K15:H31 (strain 536 / UPEC)).